The primary structure comprises 435 residues: E3 ubiquitin-protein ligase PUB22 (435 aa).

Residues 6-81 (EIPSFFLCPI…QSWCTLNASY (76 aa)) enclose the U-box domain.

Interacts with RPN12A. Binds to EXO70B2. In terms of processing, auto-ubiquitinated leading to degradation via the 26S proteasome. This Auto-ubiquitination is repressed by the bacterial elicitor flg22 thus leading to a transiently increased protein stabilization and accumulation.

Its subcellular location is the cytoplasm. The catalysed reaction is S-ubiquitinyl-[E2 ubiquitin-conjugating enzyme]-L-cysteine + [acceptor protein]-L-lysine = [E2 ubiquitin-conjugating enzyme]-L-cysteine + N(6)-ubiquitinyl-[acceptor protein]-L-lysine.. It participates in protein modification; protein ubiquitination. E3 ubiquitin-protein ligase that negatively regulates water stress response. May control in coordination with PUB23 a drought signaling pathway by ubiquitinating cytosolic RPN12a. Acts as a negative regulator of the immunity triggered by the pathogen-associated molecular patterns (PAMPs), in association with PUB23 and PUB24. Regulates EXO70B2 ubiquitination and degradation via the 26S proteasome to attenuate PAMP-induced signaling. This chain is E3 ubiquitin-protein ligase PUB22, found in Arabidopsis thaliana (Mouse-ear cress).